The chain runs to 159 residues: MAEKESSKKVTTKKPAATHRRRDGCNSITELKDRNGSSLQAIKKYIATNFDVQMDRQLLFIKRALKSGVEKGKLVQTKGKGAECAGGQGTGVGEGKKEKEKAKLLAQREKARKGXXXXXXXXXXXXXXXXXAAKKVKAAPKKAKKPVKKTTEKKEKKKS.

3 disordered regions span residues 1-31, 80-99, and 132-159; these read MAEK…ITEL, KGAE…KKEK, and AAKK…KKKS. The segment covering 10 to 22 has biased composition (basic residues); sequence VTTKKPAATHRRR. Residues 12-102 enclose the H15 domain; it reads TKKPAATHRR…GEGKKEKEKA (91 aa). The span at 84 to 93 shows a compositional bias: gly residues; sequence CAGGQGTGVG. Positions 134–148 are enriched in basic residues; the sequence is KKVKAAPKKAKKPVK. Basic and acidic residues predominate over residues 149–159; that stretch reads KTTEKKEKKKS.

The protein belongs to the histone H1/H5 family.

It localises to the nucleus. Its subcellular location is the chromosome. In terms of biological role, histones H1 are necessary for the condensation of nucleosome chains into higher-order structures. The chain is Histone H1 from Psammechinus miliaris (Green sea urchin).